Reading from the N-terminus, the 308-residue chain is Ectoine dioxygenase (308 aa).

Q131 is a binding site for L-ectoine. K137 is a 2-oxoglutarate binding site. Residues H148, D150, and H249 each contribute to the Fe cation site.

It belongs to the PhyH family. EctD subfamily. As to quaternary structure, homodimer. Requires Fe(2+) as cofactor.

It catalyses the reaction L-ectoine + 2-oxoglutarate + O2 = 5-hydroxyectoine + succinate + CO2. In terms of biological role, involved in the biosynthesis of 5-hydroxyectoine, called compatible solute, which helps organisms to survive extreme osmotic stress by acting as a highly soluble organic osmolyte. Catalyzes the 2-oxoglutarate-dependent selective hydroxylation of L-ectoine to yield (4S,5S)-5-hydroxyectoine. The polypeptide is Ectoine dioxygenase (Bordetella bronchiseptica (strain ATCC BAA-588 / NCTC 13252 / RB50) (Alcaligenes bronchisepticus)).